The primary structure comprises 336 residues: MSEMYSAPVTVLGAGSYGTALAIALARNGHKTYLWGHQPEKMAVLATERMNNAFLPDIAFPDALEIESDLVQAIAKVRDILIVVPSHVFADVLTQIKPLLNAHHRIMWATKGLERNTGRLLQTVAQEILGNQYPLAVLSGPTFAKELAQGLPTAIALSSTDSQFADEMQQRIHCSKAFRVYLNNDMIGVQLGGAIKNVIAIGAGISDGMGFGANARTALITRGLAEISRLGASLGANSNTFMGMAGLGDLVLTCTDNQSRNRRFGLMLGQGKSAEEAMAEIGQVVEGFYNTKEAYLLAQTQGVEMPIVEQIYQMLFCGKNAHDVATSLLGRERKGE.

NADPH is bound by residues Ser-16, Tyr-17, His-37, and Lys-111. Lys-111, Gly-140, and Thr-142 together coordinate sn-glycerol 3-phosphate. Residue Ala-144 participates in NADPH binding. The sn-glycerol 3-phosphate site is built by Lys-196, Asp-249, Ser-259, Arg-260, and Asn-261. Lys-196 (proton acceptor) is an active-site residue. Arg-260 lines the NADPH pocket. NADPH-binding residues include Val-284 and Glu-286.

It belongs to the NAD-dependent glycerol-3-phosphate dehydrogenase family.

It localises to the cytoplasm. It catalyses the reaction sn-glycerol 3-phosphate + NAD(+) = dihydroxyacetone phosphate + NADH + H(+). The catalysed reaction is sn-glycerol 3-phosphate + NADP(+) = dihydroxyacetone phosphate + NADPH + H(+). Its pathway is membrane lipid metabolism; glycerophospholipid metabolism. Functionally, catalyzes the reduction of the glycolytic intermediate dihydroxyacetone phosphate (DHAP) to sn-glycerol 3-phosphate (G3P), the key precursor for phospholipid synthesis. The protein is Glycerol-3-phosphate dehydrogenase [NAD(P)+] of Actinobacillus pleuropneumoniae serotype 3 (strain JL03).